Consider the following 350-residue polypeptide: Uroporphyrinogen decarboxylase (350 aa).

Residues 28–32, F47, D78, Y155, S210, and H325 each bind substrate; that span reads RQAGR.

It belongs to the uroporphyrinogen decarboxylase family. In terms of assembly, homodimer.

It localises to the cytoplasm. It catalyses the reaction uroporphyrinogen III + 4 H(+) = coproporphyrinogen III + 4 CO2. The protein operates within porphyrin-containing compound metabolism; protoporphyrin-IX biosynthesis; coproporphyrinogen-III from 5-aminolevulinate: step 4/4. Catalyzes the decarboxylation of four acetate groups of uroporphyrinogen-III to yield coproporphyrinogen-III. This Synechocystis sp. (strain ATCC 27184 / PCC 6803 / Kazusa) protein is Uroporphyrinogen decarboxylase.